The following is a 673-amino-acid chain: DNA ligase (673 aa).

NAD(+)-binding positions include Asp-32–Asp-36, Ser-81–Leu-82, and Glu-111. Lys-113 functions as the N6-AMP-lysine intermediate in the catalytic mechanism. Residues Arg-134, Glu-171, Lys-286, and Lys-310 each contribute to the NAD(+) site. Positions 404, 407, 422, and 428 each coordinate Zn(2+). The region spanning Asn-595–Phe-673 is the BRCT domain.

Belongs to the NAD-dependent DNA ligase family. LigA subfamily. Mg(2+) serves as cofactor. It depends on Mn(2+) as a cofactor.

The enzyme catalyses NAD(+) + (deoxyribonucleotide)n-3'-hydroxyl + 5'-phospho-(deoxyribonucleotide)m = (deoxyribonucleotide)n+m + AMP + beta-nicotinamide D-nucleotide.. DNA ligase that catalyzes the formation of phosphodiester linkages between 5'-phosphoryl and 3'-hydroxyl groups in double-stranded DNA using NAD as a coenzyme and as the energy source for the reaction. It is essential for DNA replication and repair of damaged DNA. The protein is DNA ligase of Ureaplasma urealyticum serovar 10 (strain ATCC 33699 / Western).